The sequence spans 362 residues: UDP-N-acetylglucosamine--N-acetylmuramyl-(pentapeptide) pyrophosphoryl-undecaprenol N-acetylglucosamine transferase (362 aa).

UDP-N-acetyl-alpha-D-glucosamine-binding positions include 10 to 12, Asn124, Arg161, Ser195, and Gln291; that span reads TAG.

This sequence belongs to the glycosyltransferase 28 family. MurG subfamily.

The protein resides in the cell membrane. The catalysed reaction is di-trans,octa-cis-undecaprenyl diphospho-N-acetyl-alpha-D-muramoyl-L-alanyl-D-glutamyl-meso-2,6-diaminopimeloyl-D-alanyl-D-alanine + UDP-N-acetyl-alpha-D-glucosamine = di-trans,octa-cis-undecaprenyl diphospho-[N-acetyl-alpha-D-glucosaminyl-(1-&gt;4)]-N-acetyl-alpha-D-muramoyl-L-alanyl-D-glutamyl-meso-2,6-diaminopimeloyl-D-alanyl-D-alanine + UDP + H(+). It functions in the pathway cell wall biogenesis; peptidoglycan biosynthesis. Cell wall formation. Catalyzes the transfer of a GlcNAc subunit on undecaprenyl-pyrophosphoryl-MurNAc-pentapeptide (lipid intermediate I) to form undecaprenyl-pyrophosphoryl-MurNAc-(pentapeptide)GlcNAc (lipid intermediate II). The polypeptide is UDP-N-acetylglucosamine--N-acetylmuramyl-(pentapeptide) pyrophosphoryl-undecaprenol N-acetylglucosamine transferase (Streptomyces collinus).